The following is a 291-amino-acid chain: Nucleotide-binding protein lmo2474 (291 aa).

ATP is bound at residue Gly-13–Thr-20. Asp-63–Gly-66 contributes to the GTP binding site.

The protein belongs to the RapZ-like family.

Functionally, displays ATPase and GTPase activities. The polypeptide is Nucleotide-binding protein lmo2474 (Listeria monocytogenes serovar 1/2a (strain ATCC BAA-679 / EGD-e)).